We begin with the raw amino-acid sequence, 304 residues long: GTPase Era (304 aa).

The 169-residue stretch at 11–179 folds into the Era-type G domain; the sequence is YCGFIAIVGR…QKIVRKSLRE (169 aa). A G1 region spans residues 19–26; the sequence is GRPNVGKS. Residue 19–26 coordinates GTP; sequence GRPNVGKS. The segment at 45-49 is G2; it reads QTTRH. Residues 66–69 form a G3 region; that stretch reads DTPG. GTP contacts are provided by residues 66-70 and 128-131; these read DTPGL and NKVD. The interval 128–131 is G4; the sequence is NKVD. The segment at 158–160 is G5; that stretch reads ISA. Residues 210-287 form the KH type-2 domain; the sequence is TGEELPYSVT…HLELWVKVKA (78 aa).

Belongs to the TRAFAC class TrmE-Era-EngA-EngB-Septin-like GTPase superfamily. Era GTPase family. As to quaternary structure, monomer.

Its subcellular location is the cytoplasm. It localises to the cell inner membrane. Its function is as follows. An essential GTPase that binds both GDP and GTP, with rapid nucleotide exchange. Plays a role in 16S rRNA processing and 30S ribosomal subunit biogenesis and possibly also in cell cycle regulation and energy metabolism. This Actinobacillus pleuropneumoniae serotype 5b (strain L20) protein is GTPase Era.